A 315-amino-acid polypeptide reads, in one-letter code: Protein SHORT INTERNODES 1 (315 aa).

Gly residues predominate over residues 1–10 (MAGFPLGGGS). Disordered regions lie at residues 1 to 24 (MAGFPLGGGSHSRDNPAPPVPPVH) and 64 to 92 (PPAPSLAGASSSSSSRGMRSSGGGGGGGG). Low complexity predominate over residues 70 to 82 (AGASSSSSSRGMR). The segment covering 83 to 92 (SSGGGGGGGG) has biased composition (gly residues). The Zn(2+) site is built by Cys-97, Cys-100, Cys-108, Cys-113, Cys-117, and Cys-124. The zn(2)-C6 fungal-type; degenerate DNA-binding region spans 97 to 124 (CQDCGNQAKKDCTHMRCRTCCKSRGFAC). 2 stretches are compositionally biased toward low complexity: residues 143-156 (QQLAALAASAAATA) and 172-182 (RPSATTPTTSS). The interval 143–186 (QQLAALAASAAATAGGAGPSRDPTKRPRARPSATTPTTSSGDQQ) is disordered. A Required for homo- and heterodimerization motif is present at residues 227-230 (IGGH).

This sequence belongs to the SHI protein family. Forms homodimers (via C-terminus). Interacts with SPL14/IPA1 (via C-terminus). As to expression, predominantly expressed in axillary buds and young panicles.

Its subcellular location is the nucleus. In terms of biological role, regulates tillering and panicle branching by modulating SPL14/IPA1 transcriptional activity on the downstream TB1 and DEP1 target genes. Binds directly to the 5'-T/GCTCTAC-3' DNA motif found in the promoter regions of both TB1 and DEP1. Represses the DNA binding activity of SPL14/IPA1 toward the promoters of both TB1 and DEP1. Exhibits weak transcriptional activation activity in yeast cells. This is Protein SHORT INTERNODES 1 from Oryza sativa subsp. japonica (Rice).